We begin with the raw amino-acid sequence, 453 residues long: Phosphatidylserine decarboxylase proenzyme 1, mitochondrial (453 aa).

Residues 1–29 (MKPRFPQNVYFLARYSYLRRFQHSQRRTF) constitute a mitochondrion transit peptide. Topologically, residues 30–74 (SSFLNNIRSNYSGARASPLGGSSGAGAGAGGGGTGDSKGNAFLVP) are mitochondrial matrix. Residues 75–93 (GATMATILMLGALHARRLY) form a helical membrane-spanning segment. Residues 94-453 (EDKKIEEKRE…GQALGRWKEE (360 aa)) are Mitochondrial intermembrane-facing. Residues aspartate 199, histidine 296, and serine 408 each act as charge relay system; for autoendoproteolytic cleavage activity in the active site. Serine 408 acts as the Schiff-base intermediate with substrate; via pyruvic acid; for decarboxylase activity in catalysis. Serine 408 bears the Pyruvic acid (Ser); by autocatalysis mark.

This sequence belongs to the phosphatidylserine decarboxylase family. PSD-B subfamily. Eukaryotic type I sub-subfamily. As to quaternary structure, heterodimer of a large membrane-associated beta subunit and a small pyruvoyl-containing alpha subunit. It depends on pyruvate as a cofactor. In terms of processing, is synthesized initially as an inactive proenzyme. Formation of the active enzyme involves a self-maturation process in which the active site pyruvoyl group is generated from an internal serine residue via an autocatalytic post-translational modification. Two non-identical subunits are generated from the proenzyme in this reaction, and the pyruvate is formed at the N-terminus of the alpha chain, which is derived from the carboxyl end of the proenzyme. The autoendoproteolytic cleavage occurs by a canonical serine protease mechanism, in which the side chain hydroxyl group of the serine supplies its oxygen atom to form the C-terminus of the beta chain, while the remainder of the serine residue undergoes an oxidative deamination to produce ammonia and the pyruvoyl prosthetic group on the alpha chain. During this reaction, the Ser that is part of the protease active site of the proenzyme becomes the pyruvoyl prosthetic group, which constitutes an essential element of the active site of the mature decarboxylase. Expressed in roots, leaves, stems and flowers.

It is found in the mitochondrion. It localises to the mitochondrion inner membrane. The enzyme catalyses a 1,2-diacyl-sn-glycero-3-phospho-L-serine + H(+) = a 1,2-diacyl-sn-glycero-3-phosphoethanolamine + CO2. It functions in the pathway phospholipid metabolism; phosphatidylethanolamine biosynthesis; phosphatidylethanolamine from CDP-diacylglycerol: step 2/2. Functionally, catalyzes the formation of phosphatidylethanolamine (PtdEtn) from phosphatidylserine (PtdSer). Plays a central role in phospholipid metabolism and in the interorganelle trafficking of phosphatidylserine. Contributes only to a minor proportion of PtdEtn production. This Arabidopsis thaliana (Mouse-ear cress) protein is Phosphatidylserine decarboxylase proenzyme 1, mitochondrial (PSD1).